Reading from the N-terminus, the 249-residue chain is Small ribosomal subunit protein eS6 (249 aa).

Residues 223–238 (LRQRDHSKKHTRKVHA) show a composition bias toward basic residues. The tract at residues 223–249 (LRQRDHSKKHTRKVHAQRAEVAAFQKK) is disordered.

The protein belongs to the eukaryotic ribosomal protein eS6 family. Ribosomal protein S6 is the major substrate of protein kinases in eukaryote ribosomes.

Component of the 40S small ribosomal subunit. Plays an important role in controlling cell growth and proliferation through the selective translation of particular classes of mRNA. This Leishmania major protein is Small ribosomal subunit protein eS6 (RPS6).